The sequence spans 489 residues: Diaminopimelate decarboxylase 2, chloroplastic (489 aa).

Residues 1-50 (MAAVTQFLSQPSSIRGTLNQYQLNQTSLSRIPFLSLKSTLKPLKRLSVKA) constitute a chloroplast transit peptide. The residue at position 51 (Ala-51) is an N-acetylalanine. N6-(pyridoxal phosphate)lysine is present on Lys-130. Pyridoxal 5'-phosphate is bound by residues Gly-309 and 345–348 (EPGR). Arg-348, Arg-384, and Tyr-388 together coordinate substrate. The active-site Proton donor is the Cys-416. Glu-417 and Tyr-445 together coordinate substrate. Tyr-445 is a binding site for pyridoxal 5'-phosphate.

This sequence belongs to the Orn/Lys/Arg decarboxylase class-II family. LysA subfamily. As to quaternary structure, homodimer. Pyridoxal 5'-phosphate is required as a cofactor.

It is found in the plastid. Its subcellular location is the chloroplast. The catalysed reaction is meso-2,6-diaminopimelate + H(+) = L-lysine + CO2. It participates in amino-acid biosynthesis; L-lysine biosynthesis via DAP pathway; L-lysine from DL-2,6-diaminopimelate: step 1/1. Functionally, specifically catalyzes the decarboxylation of meso-diaminopimelate (meso-DAP) to L-lysine. This is Diaminopimelate decarboxylase 2, chloroplastic (LYSA2) from Arabidopsis thaliana (Mouse-ear cress).